The primary structure comprises 395 residues: Sensor protein DltS (395 aa).

Helical transmembrane passes span 9 to 29 (FVFL…AVSN) and 136 to 156 (FLIL…SLYL). The Histidine kinase domain occupies 177–387 (DASHELKTPI…RLEVQLPIDG (211 aa)). Position 180 is a phosphohistidine; by autocatalysis (H180).

It is found in the cell membrane. The catalysed reaction is ATP + protein L-histidine = ADP + protein N-phospho-L-histidine.. Its function is as follows. Member of the two-component regulatory system DltS/DltR. Regulates the expression of the dlt operon. Probably phosphorylates DltR. The chain is Sensor protein DltS (dltS) from Streptococcus agalactiae serotype III (strain NEM316).